The sequence spans 89 residues: Small ribosomal subunit protein uS15 (89 aa).

It belongs to the universal ribosomal protein uS15 family. In terms of assembly, part of the 30S ribosomal subunit. Forms a bridge to the 50S subunit in the 70S ribosome, contacting the 23S rRNA.

Functionally, one of the primary rRNA binding proteins, it binds directly to 16S rRNA where it helps nucleate assembly of the platform of the 30S subunit by binding and bridging several RNA helices of the 16S rRNA. In terms of biological role, forms an intersubunit bridge (bridge B4) with the 23S rRNA of the 50S subunit in the ribosome. In Cupriavidus necator (strain ATCC 17699 / DSM 428 / KCTC 22496 / NCIMB 10442 / H16 / Stanier 337) (Ralstonia eutropha), this protein is Small ribosomal subunit protein uS15.